The sequence spans 276 residues: Mitochondrial outer membrane protein porin of 36 kDa (276 aa).

The protein belongs to the eukaryotic mitochondrial porin (TC 1.B.8.1) family.

Its subcellular location is the mitochondrion outer membrane. In terms of biological role, forms a channel through the cell membrane that allows diffusion of small hydrophilic molecules. The channel adopts an open conformation at low or zero membrane potential and a closed conformation at potentials above 30-40 mV. The open state has a weak anion selectivity whereas the closed state is cation-selective. This Solanum tuberosum (Potato) protein is Mitochondrial outer membrane protein porin of 36 kDa.